Here is a 335-residue protein sequence, read N- to C-terminus: Beta-ketoacyl-[acyl-carrier-protein] synthase III (335 aa).

Residues C119 and H261 contribute to the active site. The tract at residues 262-266 is ACP-binding; the sequence is QANQR. Residue N291 is part of the active site.

It belongs to the thiolase-like superfamily. FabH family. As to quaternary structure, homodimer.

The protein resides in the cytoplasm. The catalysed reaction is malonyl-[ACP] + acetyl-CoA + H(+) = 3-oxobutanoyl-[ACP] + CO2 + CoA. Its pathway is lipid metabolism; fatty acid biosynthesis. In terms of biological role, catalyzes the condensation reaction of fatty acid synthesis by the addition to an acyl acceptor of two carbons from malonyl-ACP. Catalyzes the first condensation reaction which initiates fatty acid synthesis and may therefore play a role in governing the total rate of fatty acid production. Possesses both acetoacetyl-ACP synthase and acetyl transacylase activities. Its substrate specificity determines the biosynthesis of branched-chain and/or straight-chain of fatty acids. The protein is Beta-ketoacyl-[acyl-carrier-protein] synthase III of Prochlorococcus marinus subsp. pastoris (strain CCMP1986 / NIES-2087 / MED4).